We begin with the raw amino-acid sequence, 242 residues long: Glycerol-3-phosphate acyltransferase (242 aa).

6 helical membrane-spanning segments follow: residues 7–27 (ISLL…IMFA), 61–81 (IAIG…ILLI), 102–122 (YYLT…PVYF), 135–155 (GFVF…WWTI), 162–182 (VSLA…IPWL), and 201–221 (DWYI…IIIW).

The protein belongs to the PlsY family. Probably interacts with PlsX.

It localises to the cell membrane. It catalyses the reaction an acyl phosphate + sn-glycerol 3-phosphate = a 1-acyl-sn-glycero-3-phosphate + phosphate. Its pathway is lipid metabolism; phospholipid metabolism. Catalyzes the transfer of an acyl group from acyl-phosphate (acyl-PO(4)) to glycerol-3-phosphate (G3P) to form lysophosphatidic acid (LPA). This enzyme utilizes acyl-phosphate as fatty acyl donor, but not acyl-CoA or acyl-ACP. This is Glycerol-3-phosphate acyltransferase from Mycoplasmoides gallisepticum (strain R(low / passage 15 / clone 2)) (Mycoplasma gallisepticum).